The primary structure comprises 343 residues: Glycerol-3-phosphate dehydrogenase [NAD(P)+] (343 aa).

Residues serine 11, tryptophan 12, histidine 32, arginine 33, and lysine 106 each contribute to the NADPH site. Positions 106, 136, and 138 each coordinate sn-glycerol 3-phosphate. Position 140 (alanine 140) interacts with NADPH. Residues lysine 192, aspartate 245, serine 255, arginine 256, and asparagine 257 each coordinate sn-glycerol 3-phosphate. Lysine 192 functions as the Proton acceptor in the catalytic mechanism. Position 256 (arginine 256) interacts with NADPH. The NADPH site is built by valine 280 and glutamate 282.

The protein belongs to the NAD-dependent glycerol-3-phosphate dehydrogenase family.

It localises to the cytoplasm. It carries out the reaction sn-glycerol 3-phosphate + NAD(+) = dihydroxyacetone phosphate + NADH + H(+). It catalyses the reaction sn-glycerol 3-phosphate + NADP(+) = dihydroxyacetone phosphate + NADPH + H(+). It participates in membrane lipid metabolism; glycerophospholipid metabolism. Catalyzes the reduction of the glycolytic intermediate dihydroxyacetone phosphate (DHAP) to sn-glycerol 3-phosphate (G3P), the key precursor for phospholipid synthesis. The protein is Glycerol-3-phosphate dehydrogenase [NAD(P)+] of Geobacillus thermodenitrificans (strain NG80-2).